The chain runs to 132 residues: Large-conductance mechanosensitive channel (132 aa).

2 helical membrane passes run 14-34 (VIDL…VSSL) and 67-87 (GNFI…FMFV).

Belongs to the MscL family. Homopentamer.

It localises to the cell membrane. Its function is as follows. Channel that opens in response to stretch forces in the membrane lipid bilayer. May participate in the regulation of osmotic pressure changes within the cell. This Bacillus cereus (strain AH820) protein is Large-conductance mechanosensitive channel.